The chain runs to 457 residues: Putative methyltransferase MT1451 (457 aa).

S-adenosyl-L-methionine contacts are provided by residues 276–282 (CAGPGGK), E301, D325, and D341. The active-site Nucleophile is the C394.

The protein belongs to the class I-like SAM-binding methyltransferase superfamily. RsmB/NOP family.

Its function is as follows. May act as RNA methyltransferase. The protein is Putative methyltransferase MT1451 of Mycobacterium tuberculosis (strain CDC 1551 / Oshkosh).